The following is a 198-amino-acid chain: Recombination protein RecR (198 aa).

The C4-type zinc-finger motif lies at 57–72 (CSVCGHITDKDPCYIC). Residues 80–175 (SVICVVQESK…KVTRIAHGLP (96 aa)) enclose the Toprim domain.

This sequence belongs to the RecR family.

In terms of biological role, may play a role in DNA repair. It seems to be involved in an RecBC-independent recombinational process of DNA repair. It may act with RecF and RecO. In Listeria welshimeri serovar 6b (strain ATCC 35897 / DSM 20650 / CCUG 15529 / CIP 8149 / NCTC 11857 / SLCC 5334 / V8), this protein is Recombination protein RecR.